A 517-amino-acid polypeptide reads, in one-letter code: Putative thymidine phosphorylase (517 aa).

The protein belongs to the thymidine/pyrimidine-nucleoside phosphorylase family. Type 2 subfamily.

The enzyme catalyses thymidine + phosphate = 2-deoxy-alpha-D-ribose 1-phosphate + thymine. The polypeptide is Putative thymidine phosphorylase (Legionella pneumophila subsp. pneumophila (strain Philadelphia 1 / ATCC 33152 / DSM 7513)).